The primary structure comprises 446 residues: MQATEANFDGLVGPTHNYAGLSFGNVASQNNEKSVANPKAAAKQGLRKMKQLADLGFHQGVLPPQERPSMRLLRELGFSGDDATVIARVARDAPELLAAASSASAMWTANAATVSPSADTNDGRVHFTPANLCSKLHRAIEHESTRRTLRTMFNDTDRFVVHEALPGTPALGDEGAANHTRFCEEYGARGVEFFVYGRSEYRRGPEPKRFPARQSFEASRAVAHRHGLADEATVYAQQNPDVIDAGVFHNDVIAVGNRNTLFCHQFAFVEPNAVYDELRAKLSGLKAAFNVIEVPDAQVSVADAVSSYLFNSQLLTRPDGKQVLVVPQECRENPRVAAYLDDLTSRTGPIDDVLVFDLRESMKNGGGPACLRLRVVLDDAERAAVTPGVWIDDTLFGRLDAWIEKHYRDRLAPADLTDPHLLAESRTALDELTQILGLGSLYDFQR.

Substrate is bound by residues 19–28 (AGLSFGNVAS), N110, and 137–138 (HR). Residue E174 is part of the active site. Position 213 (R213) interacts with substrate. The active site involves H249. 2 residues coordinate substrate: D251 and N364. C370 functions as the Nucleophile in the catalytic mechanism.

It belongs to the succinylarginine dihydrolase family. Homodimer.

The enzyme catalyses N(2)-succinyl-L-arginine + 2 H2O + 2 H(+) = N(2)-succinyl-L-ornithine + 2 NH4(+) + CO2. Its pathway is amino-acid degradation; L-arginine degradation via AST pathway; L-glutamate and succinate from L-arginine: step 2/5. Its function is as follows. Catalyzes the hydrolysis of N(2)-succinylarginine into N(2)-succinylornithine, ammonia and CO(2). The sequence is that of N-succinylarginine dihydrolase from Paraburkholderia xenovorans (strain LB400).